The chain runs to 847 residues: Zinc transporter ZIP10 (847 aa).

The N-terminal stretch at 1–26 (MMRVHTHTRLCFLCVLTLLYHQCSHC) is a signal peptide. Residues 136–374 (GRHSHSAGHP…RREVPGSPAH (239 aa)) form a disordered region. Residues 162-171 (HHENEEHTLA) show a composition bias toward basic and acidic residues. Over residues 179–188 (TLGTGATPPS) the composition is skewed to polar residues. The segment covering 190–269 (SEEHDHDHEH…QEHNDLSDQN (80 aa)) has biased composition (basic and acidic residues). Basic residues-rich tracts occupy residues 270-285 (HHHHDHHHHKHPHPHL) and 314-330 (TRRHRRPSKVKAHRGRN). Residue asparagine 385 is glycosylated (N-linked (GlcNAc...) asparagine). Transmembrane regions (helical) follow at residues 447 to 467 (FVSITIISLLSLLGVVLVPIL), 474 to 494 (FLLTFLVALAVGTLSGDALLH), and 529 to 549 (GLTALAGIYLLFIIEHCIGMF). Residues 613-676 (ELQPLDSPSK…HSHHGHCHSD (64 aa)) are disordered. Residues 629–646 (DSDHPYEAPVKTEEDNVP) show a composition bias toward basic and acidic residues. A compositionally biased stretch (basic residues) spans 648–672 (AKSKKHGHGHGHGHGHGHGHSHHGH). Helical transmembrane passes span 705-725 (AIGAAFSANITGGISTSVAVF), 750-770 (IVYNLLSALMAYAGMVIGTAV), 779-799 (SWIFAVTAGMFLYVALVDMLP), and 817-837 (FVLQNFGMLTGFGIMLLIAIF).

Belongs to the ZIP transporter (TC 2.A.5) family. Undergoes N-terminal ectodomain shedding.

It localises to the cell membrane. It is found in the apical cell membrane. It catalyses the reaction Zn(2+)(in) = Zn(2+)(out). Functionally, zinc-influx transporter. When associated with slc39a6, the heterodimer slc39a10/slc39a6 has a functional role in epithelial-mesenchymal transition (EMT) during embryonic development. Slc39a10/slc39a6 heterodimers play also an essentiel role in initiating mitosis by importing zinc into cells to initiate a pathway resulting in the onset of mitosis. When associated with slc39a6, the heterodimer controls Ncam1 phosphorylation and integration into focal adhesion complexes during EMT. The sequence is that of Zinc transporter ZIP10 from Danio rerio (Zebrafish).